Here is a 378-residue protein sequence, read N- to C-terminus: Ribosomal RNA large subunit methyltransferase G (378 aa).

The protein belongs to the methyltransferase superfamily. RlmG family.

The protein localises to the cytoplasm. The enzyme catalyses guanosine(1835) in 23S rRNA + S-adenosyl-L-methionine = N(2)-methylguanosine(1835) in 23S rRNA + S-adenosyl-L-homocysteine + H(+). In terms of biological role, specifically methylates the guanine in position 1835 (m2G1835) of 23S rRNA. The protein is Ribosomal RNA large subunit methyltransferase G of Salmonella newport (strain SL254).